The primary structure comprises 369 residues: P2X receptor B (369 aa).

At Met1–Gly25 the chain is on the cytoplasmic side. A helical membrane pass occupies residues Ile26–Ile46. Residues Lys47–Leu369 lie on the Lumenal side of the membrane. The interval Arg283–Ile296 is pore-forming motif.

This sequence belongs to the P2X receptor family.

The protein localises to the contractile vacuole membrane. In terms of biological role, P2X receptors are ATP-gated ion channels that play a role in intracellular calcium signaling. Not required for the purinergic response to extracellular nucleotides. Not essential for osmoregulation. Inward currents are evoked by intracellular ATP and ATP analogs. Insensitive to the P2 receptor antagonists PPADS and suramin, and also copper ions. Inhibited by sodium ions. Permeable to chloride ions. The chain is P2X receptor B (p2xB) from Dictyostelium discoideum (Social amoeba).